We begin with the raw amino-acid sequence, 204 residues long: Thioredoxin-like 4, chloroplastic (204 aa).

The transit peptide at methionine 1–valine 27 directs the protein to the chloroplast. Residues alanine 63–serine 201 enclose the Thioredoxin domain. Active-site nucleophile residues include cysteine 119 and cysteine 122. A disulfide bridge links cysteine 119 with cysteine 122.

Belongs to the thioredoxin family.

The protein resides in the plastid. It is found in the chloroplast. Functionally, probable thiol-disulfide oxidoreductase that may participate in various redox reactions. This is Thioredoxin-like 4, chloroplastic from Arabidopsis thaliana (Mouse-ear cress).